Reading from the N-terminus, the 367-residue chain is Chorismate synthase (367 aa).

2 residues coordinate NADP(+): Arg-48 and Arg-54. FMN is bound by residues 125–127 (RSS), 238–239 (NA), Gly-278, 293–297 (KPTSS), and Arg-319.

The protein belongs to the chorismate synthase family. In terms of assembly, homotetramer. It depends on FMNH2 as a cofactor.

The catalysed reaction is 5-O-(1-carboxyvinyl)-3-phosphoshikimate = chorismate + phosphate. It functions in the pathway metabolic intermediate biosynthesis; chorismate biosynthesis; chorismate from D-erythrose 4-phosphate and phosphoenolpyruvate: step 7/7. Functionally, catalyzes the anti-1,4-elimination of the C-3 phosphate and the C-6 proR hydrogen from 5-enolpyruvylshikimate-3-phosphate (EPSP) to yield chorismate, which is the branch point compound that serves as the starting substrate for the three terminal pathways of aromatic amino acid biosynthesis. This reaction introduces a second double bond into the aromatic ring system. In Stenotrophomonas maltophilia (strain K279a), this protein is Chorismate synthase.